We begin with the raw amino-acid sequence, 427 residues long: Glutamate-1-semialdehyde 2,1-aminomutase 1 (427 aa).

Residue Lys-267 is modified to N6-(pyridoxal phosphate)lysine.

This sequence belongs to the class-III pyridoxal-phosphate-dependent aminotransferase family. HemL subfamily. In terms of assembly, homodimer. Pyridoxal 5'-phosphate is required as a cofactor.

It is found in the cytoplasm. It catalyses the reaction (S)-4-amino-5-oxopentanoate = 5-aminolevulinate. The protein operates within porphyrin-containing compound metabolism; protoporphyrin-IX biosynthesis; 5-aminolevulinate from L-glutamyl-tRNA(Glu): step 2/2. The protein is Glutamate-1-semialdehyde 2,1-aminomutase 1 of Macrococcus caseolyticus (strain JCSC5402) (Macrococcoides caseolyticum).